The primary structure comprises 113 residues: Large ribosomal subunit protein uL22 (113 aa).

This sequence belongs to the universal ribosomal protein uL22 family. Part of the 50S ribosomal subunit.

In terms of biological role, this protein binds specifically to 23S rRNA; its binding is stimulated by other ribosomal proteins, e.g. L4, L17, and L20. It is important during the early stages of 50S assembly. It makes multiple contacts with different domains of the 23S rRNA in the assembled 50S subunit and ribosome. Functionally, the globular domain of the protein is located near the polypeptide exit tunnel on the outside of the subunit, while an extended beta-hairpin is found that lines the wall of the exit tunnel in the center of the 70S ribosome. The sequence is that of Large ribosomal subunit protein uL22 from Natranaerobius thermophilus (strain ATCC BAA-1301 / DSM 18059 / JW/NM-WN-LF).